Reading from the N-terminus, the 118-residue chain is Ribonuclease P protein component (118 aa).

It belongs to the RnpA family. As to quaternary structure, consists of a catalytic RNA component (M1 or rnpB) and a protein subunit.

The catalysed reaction is Endonucleolytic cleavage of RNA, removing 5'-extranucleotides from tRNA precursor.. In terms of biological role, RNaseP catalyzes the removal of the 5'-leader sequence from pre-tRNA to produce the mature 5'-terminus. It can also cleave other RNA substrates such as 4.5S RNA. The protein component plays an auxiliary but essential role in vivo by binding to the 5'-leader sequence and broadening the substrate specificity of the ribozyme. The protein is Ribonuclease P protein component of Mycobacterium sp. (strain KMS).